Consider the following 171-residue polypeptide: 3-hydroxydecanoyl-[acyl-carrier-protein] dehydratase (171 aa).

His-71 is an active-site residue.

The protein belongs to the thioester dehydratase family. FabA subfamily. In terms of assembly, homodimer.

The protein resides in the cytoplasm. The enzyme catalyses a (3R)-hydroxyacyl-[ACP] = a (2E)-enoyl-[ACP] + H2O. It carries out the reaction (3R)-hydroxydecanoyl-[ACP] = (2E)-decenoyl-[ACP] + H2O. It catalyses the reaction (2E)-decenoyl-[ACP] = (3Z)-decenoyl-[ACP]. Its pathway is lipid metabolism; fatty acid biosynthesis. Necessary for the introduction of cis unsaturation into fatty acids. Catalyzes the dehydration of (3R)-3-hydroxydecanoyl-ACP to E-(2)-decenoyl-ACP and then its isomerization to Z-(3)-decenoyl-ACP. Can catalyze the dehydratase reaction for beta-hydroxyacyl-ACPs with saturated chain lengths up to 16:0, being most active on intermediate chain length. The sequence is that of 3-hydroxydecanoyl-[acyl-carrier-protein] dehydratase from Agrobacterium fabrum (strain C58 / ATCC 33970) (Agrobacterium tumefaciens (strain C58)).